The primary structure comprises 727 residues: Bromodomain-containing protein C631.02 (727 aa).

Disordered stretches follow at residues 27–231 and 341–369; these read AATI…PPMT and TSYS…AAMY. Residues 56-68 are compositionally biased toward acidic residues; that stretch reads ENDDGTLDLFGDS. The segment covering 69–78 has biased composition (basic and acidic residues); it reads ELEKEQKGDN. A compositionally biased stretch (polar residues) spans 102 to 114; it reads PSSPTHPSVSNIT. Residues 128-150 are compositionally biased toward basic and acidic residues; it reads EEEKSSESLDSHTHPPKRVRNED. Residues 153 to 177 are compositionally biased toward polar residues; sequence LTFSKTSPVSPSSLKDGASNTVTND. The residue at position 162 (S162) is a Phosphoserine. The span at 206–231 shows a compositional bias: basic and acidic residues; it reads SKEHSSPHDETVKKEENDKDQYPPMT. The region spanning 229-335 is the Bromo 1 domain; the sequence is PMTKEQHKYI…ATFERQLKQL (107 aa). The Bromo 2 domain occupies 388 to 497; it reads RKDAAEMKFC…SIFQKLWANK (110 aa). The region spanning 570–650 is the NET domain; the sequence is RSLSVDIYPP…KGDEIGAEAL (81 aa). A disordered region spans residues 699–727; that stretch reads IAAYNTKSLGSDDSSSEDDGESSESSDSA. A compositionally biased stretch (acidic residues) spans 712–727; that stretch reads SSSEDDGESSESSDSA.

It belongs to the BET family.

It localises to the nucleus. The polypeptide is Bromodomain-containing protein C631.02 (Schizosaccharomyces pombe (strain 972 / ATCC 24843) (Fission yeast)).